The chain runs to 85 residues: Defensin-like protein 76 (85 aa).

A signal peptide spans 1–27 (MQNQKHSHILTAITIVLLFAMAAKINA). 4 cysteine pairs are disulfide-bonded: C35–C70, C40–C59, C44–C68, and C48–C69.

This sequence belongs to the DEFL family.

Its subcellular location is the secreted. This is Defensin-like protein 76 (LCR86) from Arabidopsis thaliana (Mouse-ear cress).